The following is a 97-amino-acid chain: Co-chaperonin GroES (97 aa).

This sequence belongs to the GroES chaperonin family. Heptamer of 7 subunits arranged in a ring. Interacts with the chaperonin GroEL.

Its subcellular location is the cytoplasm. In terms of biological role, together with the chaperonin GroEL, plays an essential role in assisting protein folding. The GroEL-GroES system forms a nano-cage that allows encapsulation of the non-native substrate proteins and provides a physical environment optimized to promote and accelerate protein folding. GroES binds to the apical surface of the GroEL ring, thereby capping the opening of the GroEL channel. The protein is Co-chaperonin GroES of Edwardsiella ictaluri (strain 93-146).